The chain runs to 273 residues: Ethanolamine ammonia-lyase small subunit (273 aa).

Adenosylcob(III)alamin is bound by residues Val164, Glu185, and Cys214.

Belongs to the EutC family. In terms of assembly, the basic unit is a heterodimer which dimerizes to form tetramers. The heterotetramers trimerize; 6 large subunits form a core ring with 6 small subunits projecting outwards. It depends on adenosylcob(III)alamin as a cofactor.

The protein localises to the bacterial microcompartment. It carries out the reaction ethanolamine = acetaldehyde + NH4(+). It functions in the pathway amine and polyamine degradation; ethanolamine degradation. Its function is as follows. Catalyzes the deamination of various vicinal amino-alcohols to oxo compounds. Allows this organism to utilize ethanolamine as the sole source of nitrogen and carbon in the presence of external vitamin B12. The sequence is that of Ethanolamine ammonia-lyase small subunit from Pseudomonas aeruginosa (strain UCBPP-PA14).